Reading from the N-terminus, the 138-residue chain is Acidic phospholipase A2 DsM-a2/DsM-a2' (138 aa).

Residues 1–16 (MRTLWIVAVCLIGVEG) form the signal peptide. 7 disulfides stabilise this stretch: Cys42/Cys131, Cys44/Cys60, Cys59/Cys111, Cys65/Cys138, Cys66/Cys104, Cys73/Cys97, and Cys91/Cys102. Ca(2+) contacts are provided by Tyr43, Gly45, and Gly47. His63 is a catalytic residue. A Ca(2+)-binding site is contributed by Asp64. Asp105 is a catalytic residue.

This sequence belongs to the phospholipase A2 family. Group II subfamily. D49 sub-subfamily. It depends on Ca(2+) as a cofactor. As to expression, expressed by the venom gland.

Its subcellular location is the secreted. It carries out the reaction a 1,2-diacyl-sn-glycero-3-phosphocholine + H2O = a 1-acyl-sn-glycero-3-phosphocholine + a fatty acid + H(+). Exhibits high hydrolytic activities and shows strong preference for the anionic micelles (dPPC with deoxycholate) to the zwitterionic micelles (dPPC with Triton X-100). PLA2 catalyzes the calcium-dependent hydrolysis of the 2-acyl groups in 3-sn-phosphoglycerides. This chain is Acidic phospholipase A2 DsM-a2/DsM-a2', found in Daboia siamensis (Eastern Russel's viper).